Reading from the N-terminus, the 266-residue chain is Glutamate racemase (266 aa).

Substrate-binding positions include 9-10 (DS) and 41-42 (YG). Cys72 (proton donor/acceptor) is an active-site residue. A substrate-binding site is contributed by 73–74 (NT). The active-site Proton donor/acceptor is Cys183. 184–185 (TH) is a substrate binding site.

Belongs to the aspartate/glutamate racemases family.

It carries out the reaction L-glutamate = D-glutamate. The protein operates within cell wall biogenesis; peptidoglycan biosynthesis. In terms of biological role, provides the (R)-glutamate required for cell wall biosynthesis. This is Glutamate racemase from Listeria monocytogenes serotype 4a (strain HCC23).